The chain runs to 84 residues: Venom protein SynTx (84 aa).

An N-terminal signal peptide occupies residues 1-19 (TLLLTLVVVTIVCLDLGYT). 4 disulfides stabilise this stretch: Cys-22-Cys-43, Cys-36-Cys-61, Cys-65-Cys-76, and Cys-77-Cys-82.

This sequence belongs to the three-finger toxin family. Short-chain subfamily. Aminergic toxin sub-subfamily. Homodimer; disulfide-linked. Expressed by the venom gland.

It localises to the secreted. Its function is as follows. This protein shows a synergetic toxic effect in that it enhances the toxicity of other toxins. This Dendroaspis jamesoni jamesoni (Jameson's mamba) protein is Venom protein SynTx.